The sequence spans 255 residues: Reticulon-like protein B3 (255 aa).

The span at 1–25 shows a compositional bias: basic and acidic residues; it reads MAEEHKHEESIMEKISEKIHGHDDS. The disordered stretch occupies residues 1 to 38; the sequence is MAEEHKHEESIMEKISEKIHGHDDSSSSSSDSDDDKNS. N-acetylalanine is present on A2. Residues 64 to 255 form the Reticulon domain; sequence PADIFLWRNK…GAFAFIKKKD (192 aa). 3 consecutive transmembrane segments (helical) span residues 75–95, 97–117, and 186–206; these read VSGG…LLEY, LLTL…LWSS, and CNFL…PVLY.

The protein localises to the endoplasmic reticulum membrane. The protein resides in the vacuole membrane. This is Reticulon-like protein B3 (RTNLB3) from Arabidopsis thaliana (Mouse-ear cress).